The following is a 156-amino-acid chain: Small ribosomal subunit protein uS7 (156 aa).

This sequence belongs to the universal ribosomal protein uS7 family. As to quaternary structure, part of the 30S ribosomal subunit. Contacts proteins S9 and S11.

One of the primary rRNA binding proteins, it binds directly to 16S rRNA where it nucleates assembly of the head domain of the 30S subunit. Is located at the subunit interface close to the decoding center, probably blocks exit of the E-site tRNA. This Anaeromyxobacter dehalogenans (strain 2CP-1 / ATCC BAA-258) protein is Small ribosomal subunit protein uS7.